The primary structure comprises 524 residues: Bifunctional purine biosynthesis protein PurH (524 aa).

Residues 1–144 (MVRRALVSVS…KNAAHVGVVV (144 aa)) form the MGS-like domain.

The protein belongs to the PurH family.

The catalysed reaction is (6R)-10-formyltetrahydrofolate + 5-amino-1-(5-phospho-beta-D-ribosyl)imidazole-4-carboxamide = 5-formamido-1-(5-phospho-D-ribosyl)imidazole-4-carboxamide + (6S)-5,6,7,8-tetrahydrofolate. The enzyme catalyses IMP + H2O = 5-formamido-1-(5-phospho-D-ribosyl)imidazole-4-carboxamide. It functions in the pathway purine metabolism; IMP biosynthesis via de novo pathway; 5-formamido-1-(5-phospho-D-ribosyl)imidazole-4-carboxamide from 5-amino-1-(5-phospho-D-ribosyl)imidazole-4-carboxamide (10-formyl THF route): step 1/1. Its pathway is purine metabolism; IMP biosynthesis via de novo pathway; IMP from 5-formamido-1-(5-phospho-D-ribosyl)imidazole-4-carboxamide: step 1/1. The polypeptide is Bifunctional purine biosynthesis protein PurH (Anaeromyxobacter sp. (strain Fw109-5)).